The chain runs to 625 residues: Somatic embryogenesis receptor kinase 1 (625 aa).

Positions M1–A26 are cleaved as a signal peptide. The Extracellular segment spans residues N27–G238. An intrachain disulfide couples C58 to C65. Leucine-rich repeat receptor-like protein kinase binding stretches follow at residues T59–N78 and Y97–S102. F61–H62 is a binding site for brassinolide. LRR repeat units lie at residues L92–L116, N118–L140, S141–I164, and T165–L189. 2 N-linked (GlcNAc...) asparagine glycosylation sites follow: N104 and N115. Leucine-rich repeat receptor-like protein kinase binding regions lie at residues D123–L126 and F145–R147. N-linked (GlcNAc...) asparagine glycosylation is found at N150, N163, and N184. The leucine-rich repeat receptor-like protein kinase binding stretch occupies residues D171–S194. C202 and C210 are oxidised to a cystine. Residues A239 to F259 traverse the membrane as a helical segment. Residues A260 to R625 are Cytoplasmic-facing. 3 positions are modified to phosphoserine: S291, S299, and S303. A Protein kinase domain is found at F302–Q589. L308–V316 is a binding site for ATP. T325 is modified (phosphothreonine). Residue K330 coordinates ATP. 2 positions are modified to phosphothreonine: T337 and T346. Phosphoserine is present on residues S352, S383, S386, and S394. Phosphothreonine is present on T402. S415 bears the Phosphoserine mark. Residue D429 is the Proton acceptor of the active site. Y456 carries the post-translational modification Phosphotyrosine. T459, T462, T463, and T468 each carry phosphothreonine. Y476 is subject to Phosphotyrosine. Position 478 is a phosphoserine (S478). T479 is subject to Phosphothreonine. S483 is subject to Phosphoserine. T541 carries the phosphothreonine modification. Y543 carries the post-translational modification Phosphotyrosine. The residue at position 559 (T559) is a Phosphothreonine. 2 positions are modified to phosphoserine: S606 and S612. The residue at position 613 (T613) is a Phosphothreonine. A Phosphotyrosine modification is found at Y614. Residue S622 is modified to Phosphoserine.

The protein belongs to the protein kinase superfamily. Ser/Thr protein kinase family. As to quaternary structure, monomer, homo- and heterodimer. Interacts with KAPP, CDC48A, GRF6 or GRF7, SERK2, BRI1 and SERK3/BAK1 to form the SERK1 signaling complex. Bind to BRI1 in a brassinolide-dependent manner. Heterodimer with PSKR1. Interacts with the EF-Tu receptor EFR and FLS2 in a specific ligand-induced manner. Interacts with ERECTA in a EPF2-induced manner. Interacts with ERL1 in a EPF1-induced manner. Interacts with TMM. In the presence of the signal peptide RGF1, interacts with RGI1/RGFR4/RCH2, RGI2/RGFR3/RCH1, RGI3/RGFR1, RGI4/RGFR2/SKM2 and RGI5/RGFR5. Mg(2+) serves as cofactor. In terms of processing, glycosylated. Important for targeting to the plasma membrane. Post-translationally, intermolecular autophosphorylation. The catalytic activity of SERK1 depends on the presence of a phosphorylated Thr residue in SERK1. The phosphorylation is induced by brassinosteroids. Transphosphorylation by BRI1 occurs only on Ser-299 and Thr-462. Dephosphorylation of threonine residues by the kinase-associated protein phosphatase (KAPP) is involved in SERK1 endocytosis. As to expression, expressed in flowers, tapetum, developing microspores, all cells of the embryo sac, provascular strands and developing vascular bundles. Low expression in adult vascular tissue. Detected in root meristem.

The protein resides in the cell membrane. It localises to the endoplasmic reticulum membrane. The enzyme catalyses L-seryl-[protein] + ATP = O-phospho-L-seryl-[protein] + ADP + H(+). The catalysed reaction is L-threonyl-[protein] + ATP = O-phospho-L-threonyl-[protein] + ADP + H(+). It catalyses the reaction L-tyrosyl-[protein] + ATP = O-phospho-L-tyrosyl-[protein] + ADP + H(+). With respect to regulation, inhibited by manganese. Dual specificity kinase acting on both serine/threonine- and tyrosine-containing substrates. Phosphorylates BRI1 on 'Ser-887' and CDC48 on at least one threonine residue and on 'Ser-41'. Confers embryogenic competence. Acts redundantly with SERK2 as a control point for sporophytic development controlling male gametophyte production. Involved in the brassinolide signaling pathway. Probably required during small peptide (e.g. RGF1) signaling. Involved in the perception of phytosulfokine and subsequent signal transduction. Acts as a RLK5 coreceptor and promotes high-affinity IDA sensing, thus being a positive regulator of floral abscission. This is Somatic embryogenesis receptor kinase 1 from Arabidopsis thaliana (Mouse-ear cress).